A 171-amino-acid polypeptide reads, in one-letter code: MLSQIRTLITILKHTFTRADTVEYPEQKPYLSPRYRGRIVLTRDPDGEERCVACNLCSVACPVDCISVVKTEKEDGRWEAESFTINFSRCIMCGFCEEACPTHAIQLTPDVEMAEYDRQNLVFEKEHLLISGPGKYHDYNFYKVSGKAINGKGKGEAHNEQSPINVRSLLP.

2 4Fe-4S ferredoxin-type domains span residues 41 to 71 (LTRDPDGEERCVACNLCSVACPVDCISVVKT) and 81 to 110 (ESFTINFSRCIMCGFCEEACPTHAIQLTPD). Positions 51, 54, 57, 61, 90, 93, 96, and 100 each coordinate [4Fe-4S] cluster.

Belongs to the complex I 23 kDa subunit family. As to quaternary structure, NDH-1 is composed of 13 different subunits. Subunits NuoA, H, J, K, L, M, N constitute the membrane sector of the complex. It depends on [4Fe-4S] cluster as a cofactor.

It is found in the cell inner membrane. It carries out the reaction a quinone + NADH + 5 H(+)(in) = a quinol + NAD(+) + 4 H(+)(out). Functionally, NDH-1 shuttles electrons from NADH, via FMN and iron-sulfur (Fe-S) centers, to quinones in the respiratory chain. The immediate electron acceptor for the enzyme in this species is believed to be ubiquinone. Couples the redox reaction to proton translocation (for every two electrons transferred, four hydrogen ions are translocated across the cytoplasmic membrane), and thus conserves the redox energy in a proton gradient. The protein is NADH-quinone oxidoreductase subunit I of Shewanella woodyi (strain ATCC 51908 / MS32).